The primary structure comprises 141 residues: Large ribosomal subunit protein uL11 (141 aa).

The protein belongs to the universal ribosomal protein uL11 family. Part of the ribosomal stalk of the 50S ribosomal subunit. Interacts with L10 and the large rRNA to form the base of the stalk. L10 forms an elongated spine to which L12 dimers bind in a sequential fashion forming a multimeric L10(L12)X complex. Post-translationally, one or more lysine residues are methylated.

Forms part of the ribosomal stalk which helps the ribosome interact with GTP-bound translation factors. The chain is Large ribosomal subunit protein uL11 from Roseobacter denitrificans (strain ATCC 33942 / OCh 114) (Erythrobacter sp. (strain OCh 114)).